Consider the following 69-residue polypeptide: Cytochrome c oxidase subunit 8A, mitochondrial (69 aa).

A mitochondrion-targeting transit peptide spans 1–25; that stretch reads MYVVTPLLLRGLTGSARRLPVPRAQ. The short motif at 2–19 is the SIFI-degron element; sequence YVVTPLLLRGLTGSARRL. Residues 26 to 36 are Mitochondrial matrix-facing; the sequence is VHSMPPEQKLG. A helical transmembrane segment spans residues 37–60; the sequence is VLELAIGFTSCMVTFLLPAGWIMS. At 61-69 the chain is on the mitochondrial intermembrane side; sequence HLESYKKRG.

This sequence belongs to the cytochrome c oxidase VIII family. In terms of assembly, component of the cytochrome c oxidase (complex IV, CIV), a multisubunit enzyme composed of 14 subunits. The complex is composed of a catalytic core of 3 subunits MT-CO1, MT-CO2 and MT-CO3, encoded in the mitochondrial DNA, and 11 supernumerary subunits COX4I, COX5A, COX5B, COX6A, COX6B, COX6C, COX7A, COX7B, COX7C, COX8 and NDUFA4, which are encoded in the nuclear genome. The complex exists as a monomer or a dimer and forms supercomplexes (SCs) in the inner mitochondrial membrane with NADH-ubiquinone oxidoreductase (complex I, CI) and ubiquinol-cytochrome c oxidoreductase (cytochrome b-c1 complex, complex III, CIII), resulting in different assemblies (supercomplex SCI(1)III(2)IV(1) and megacomplex MCI(2)III(2)IV(2)). Post-translationally, in response to mitochondrial stress, the precursor protein is ubiquitinated by the SIFI complex in the cytoplasm before mitochondrial import, leading to its degradation. Within the SIFI complex, UBR4 initiates ubiquitin chain that are further elongated or branched by KCMF1.

The protein resides in the mitochondrion inner membrane. Its pathway is energy metabolism; oxidative phosphorylation. Functionally, component of the cytochrome c oxidase, the last enzyme in the mitochondrial electron transport chain which drives oxidative phosphorylation. The respiratory chain contains 3 multisubunit complexes succinate dehydrogenase (complex II, CII), ubiquinol-cytochrome c oxidoreductase (cytochrome b-c1 complex, complex III, CIII) and cytochrome c oxidase (complex IV, CIV), that cooperate to transfer electrons derived from NADH and succinate to molecular oxygen, creating an electrochemical gradient over the inner membrane that drives transmembrane transport and the ATP synthase. Cytochrome c oxidase is the component of the respiratory chain that catalyzes the reduction of oxygen to water. Electrons originating from reduced cytochrome c in the intermembrane space (IMS) are transferred via the dinuclear copper A center (CU(A)) of subunit 2 and heme A of subunit 1 to the active site in subunit 1, a binuclear center (BNC) formed by heme A3 and copper B (CU(B)). The BNC reduces molecular oxygen to 2 water molecules using 4 electrons from cytochrome c in the IMS and 4 protons from the mitochondrial matrix. The protein is Cytochrome c oxidase subunit 8A, mitochondrial (COX8A) of Ateles belzebuth (White-bellied spider monkey).